A 62-amino-acid chain; its full sequence is Coiled-coil domain-containing protein YLR146W-A (62 aa).

The stretch at 14–49 (EHARMLQNEIQQLFAQLRDTNSQIRCDLNEFEQIKE) forms a coiled coil.

The sequence is that of Coiled-coil domain-containing protein YLR146W-A from Saccharomyces cerevisiae (strain ATCC 204508 / S288c) (Baker's yeast).